Here is a 55-residue protein sequence, read N- to C-terminus: UPF0391 membrane protein Tbd_2772 (55 aa).

Transmembrane regions (helical) follow at residues 1 to 21 (MFGW…FGFA) and 28 to 48 (AWIA…MLVM).

Belongs to the UPF0391 family.

Its subcellular location is the cell membrane. The chain is UPF0391 membrane protein Tbd_2772 from Thiobacillus denitrificans (strain ATCC 25259 / T1).